Here is a 313-residue protein sequence, read N- to C-terminus: 1-phosphofructokinase (313 aa).

ATP-binding positions include 222 to 227 and 254 to 255; these read SMGAKG and GD. Residue D255 is the Proton acceptor of the active site.

It belongs to the carbohydrate kinase PfkB family.

The catalysed reaction is beta-D-fructose 1-phosphate + ATP = beta-D-fructose 1,6-bisphosphate + ADP + H(+). In terms of biological role, catalyzes the ATP-dependent phosphorylation of fructose-l-phosphate to fructose-l,6-bisphosphate. The protein is 1-phosphofructokinase (fruK) of Haemophilus influenzae (strain ATCC 51907 / DSM 11121 / KW20 / Rd).